Here is a 339-residue protein sequence, read N- to C-terminus: MHVGIFADGGYEKGMGHVVRMKRLAEGLKQRCLITFYTNQDSEAFLHEEHWQVIVKPELQQHEFILREIKSKKLDLLLFDILGAPAELLKKIKTETDAKIVLFEEKNGKSIQYSDAVINGIYGDIRSRVYVQGNTRIYEGPDYLILHPAFQAAREDYTLKKDCRNILVALGGSDPKQLIFKVLAAADQVPDIKDKNMMFVMGSASPHQEAVRRRIEKKPQYKMIEQTNDMAGLMKQADAAIVAGGISLYEAICIGVPCLVLSQVEHQTATAKTFADQGAALDLGLGELVPDETLIYQMSRIMSSYPLRLSLHKGGRPLVDGKGIIRVTAILQDLYEQEI.

A helical membrane pass occupies residues 241-261; that stretch reads IVAGGISLYEAICIGVPCLVL.

The protein to M.jannaschii MJ1062.

The protein localises to the cell membrane. The protein operates within spore coat biogenesis; spore coat polysaccharide biosynthesis. The sequence is that of Spore coat polysaccharide biosynthesis protein SpsG (spsG) from Bacillus subtilis (strain 168).